The sequence spans 358 residues: Photosystem II protein D1 2 (358 aa).

Transmembrane regions (helical) follow at residues Y28–I45, H117–L132, and W141–V155. H117 provides a ligand contact to chlorophyll a. Y125 lines the pheophytin a pocket. [CaMn4O5] cluster is bound by residues D169 and E188. A helical membrane pass occupies residues F196 to L217. H197 is a binding site for chlorophyll a. A quinone-binding positions include H214 and S263–F264. H214 contacts Fe cation. Fe cation is bound at residue H271. A helical transmembrane segment spans residues F273–M287. Residues H331, E332, D341, and A343 each coordinate [CaMn4O5] cluster. Positions T344–G358 are excised as a propeptide.

It belongs to the reaction center PufL/M/PsbA/D family. As to quaternary structure, PSII is composed of 1 copy each of membrane proteins PsbA, PsbB, PsbC, PsbD, PsbE, PsbF, PsbH, PsbI, PsbJ, PsbK, PsbL, PsbM, PsbT, PsbX, PsbY, PsbZ, Psb30/Ycf12, peripheral proteins PsbO, CyanoQ (PsbQ), PsbU, PsbV and a large number of cofactors. It forms dimeric complexes. The D1/D2 heterodimer binds P680, chlorophylls that are the primary electron donor of PSII, and subsequent electron acceptors. It shares a non-heme iron and each subunit binds pheophytin, quinone, additional chlorophylls, carotenoids and lipids. D1 provides most of the ligands for the Mn4-Ca-O5 cluster of the oxygen-evolving complex (OEC). There is also a Cl(-1) ion associated with D1 and D2, which is required for oxygen evolution. The PSII complex binds additional chlorophylls, carotenoids and specific lipids. serves as cofactor. Tyr-160 forms a radical intermediate that is referred to as redox-active TyrZ, YZ or Y-Z. Post-translationally, C-terminally processed by CtpA; processing is essential to allow assembly of the oxygen-evolving complex and thus photosynthetic growth.

It is found in the cellular thylakoid membrane. The enzyme catalyses 2 a plastoquinone + 4 hnu + 2 H2O = 2 a plastoquinol + O2. Its function is as follows. Photosystem II (PSII) is a light-driven water:plastoquinone oxidoreductase that uses light energy to abstract electrons from H(2)O, generating O(2) and a proton gradient subsequently used for ATP formation. It consists of a core antenna complex that captures photons, and an electron transfer chain that converts photonic excitation into a charge separation. The D1/D2 (PsbA/PsbD) reaction center heterodimer binds P680, the primary electron donor of PSII as well as several subsequent electron acceptors. This chain is Photosystem II protein D1 2, found in Synechococcus sp. (strain RCC307).